The chain runs to 102 residues: RxLR effector protein PexRD41 (102 aa).

Residues 1-21 (MRSIFYFALAFAALTCSNASA) form the signal peptide. The short motif at 39–53 (RSLRVAGQEAARGEE) is the RxLR-dEER element.

This sequence belongs to the RxLR effector family. In terms of assembly, interacts with host KRBP1.

The protein localises to the secreted. It is found in the host cytoplasm. Its subcellular location is the host nucleus. The protein resides in the host nucleolus. Effector that enhances P.infestans colonization of host plant leaves. During the early stages of P.infestans infection, interacts with and stabilizes host potato K-homology (KH) RNA-binding protein KRBP1, leading to its accumulation. This chain is RxLR effector protein PexRD41, found in Phytophthora infestans (strain T30-4) (Potato late blight agent).